The following is a 283-amino-acid chain: Zinc import ATP-binding protein ZnuC (283 aa).

Residues 13 to 228 enclose the ABC transporter domain; the sequence is VEMRNAGVHR…PEYVRLFGAR (216 aa). 45-52 contacts ATP; the sequence is GPNGSGKS. A disordered region spans residues 264–283; the sequence is HHHDHARDGGQGGGGHGHAG. Residues 272–283 are compositionally biased toward gly residues; the sequence is GGQGGGGHGHAG.

The protein belongs to the ABC transporter superfamily. Zinc importer (TC 3.A.1.15.5) family. The complex is composed of two ATP-binding proteins (ZnuC), two transmembrane proteins (ZnuB) and a solute-binding protein (ZnuA).

The protein localises to the cell inner membrane. It catalyses the reaction Zn(2+)(out) + ATP(in) + H2O(in) = Zn(2+)(in) + ADP(in) + phosphate(in) + H(+)(in). Functionally, part of the ABC transporter complex ZnuABC involved in zinc import. Responsible for energy coupling to the transport system. The polypeptide is Zinc import ATP-binding protein ZnuC (Chelativorans sp. (strain BNC1)).